The chain runs to 203 residues: Outer-membrane lipoprotein carrier protein (203 aa).

An N-terminal signal peptide occupies residues 1–21 (MKKQLMTSCLFAAVLAAPAFA).

Belongs to the LolA family. As to quaternary structure, monomer.

It is found in the periplasm. Participates in the translocation of lipoproteins from the inner membrane to the outer membrane. Only forms a complex with a lipoprotein if the residue after the N-terminal Cys is not an aspartate (The Asp acts as a targeting signal to indicate that the lipoprotein should stay in the inner membrane). The polypeptide is Outer-membrane lipoprotein carrier protein (Sodalis glossinidius (strain morsitans)).